The sequence spans 328 residues: MTIYSKIIGTGSYLPPNRVTNQELTAQLASNGIETSDEWIVSRSGISARHYADAGVQSSDLAVEAAKRALEMAKLGVDDVDLIILATSTPDFFGGFPSTACVVQRKLGITNDCAAVDVQAVCSGFVYAVSIADNFIKAGTHKNVLVIGAEVFSRIIDFEDRTTCVLFGDGAGAVLMTASQEPGVLATKLHANGNYGDILCLPGKVSKGVVEGSAFLYMDGPAVFKLAVSVLDKVAHEALEIAGMQSSEVDWIIPHQANIRIMQSTAKKLGLGMDKMIVTVDQHGNTSAASIPMALDVGVRDGRIKPGQNVMMEGVGGGFTWGAVLARM.

Active-site residues include cysteine 122 and histidine 255. Residues 256-260 (QANIR) are ACP-binding. Asparagine 285 is a catalytic residue.

The protein belongs to the thiolase-like superfamily. FabH family. Homodimer.

It localises to the cytoplasm. It carries out the reaction malonyl-[ACP] + acetyl-CoA + H(+) = 3-oxobutanoyl-[ACP] + CO2 + CoA. It functions in the pathway lipid metabolism; fatty acid biosynthesis. Catalyzes the condensation reaction of fatty acid synthesis by the addition to an acyl acceptor of two carbons from malonyl-ACP. Catalyzes the first condensation reaction which initiates fatty acid synthesis and may therefore play a role in governing the total rate of fatty acid production. Possesses both acetoacetyl-ACP synthase and acetyl transacylase activities. Its substrate specificity determines the biosynthesis of branched-chain and/or straight-chain of fatty acids. In Janthinobacterium sp. (strain Marseille) (Minibacterium massiliensis), this protein is Beta-ketoacyl-[acyl-carrier-protein] synthase III.